A 246-amino-acid polypeptide reads, in one-letter code: 1-(5-phosphoribosyl)-5-[(5-phosphoribosylamino)methylideneamino] imidazole-4-carboxamide isomerase (246 aa).

Aspartate 10 (proton acceptor) is an active-site residue. The active-site Proton donor is aspartate 131.

This sequence belongs to the HisA/HisF family.

The protein resides in the cytoplasm. It carries out the reaction 1-(5-phospho-beta-D-ribosyl)-5-[(5-phospho-beta-D-ribosylamino)methylideneamino]imidazole-4-carboxamide = 5-[(5-phospho-1-deoxy-D-ribulos-1-ylimino)methylamino]-1-(5-phospho-beta-D-ribosyl)imidazole-4-carboxamide. It participates in amino-acid biosynthesis; L-histidine biosynthesis; L-histidine from 5-phospho-alpha-D-ribose 1-diphosphate: step 4/9. This chain is 1-(5-phosphoribosyl)-5-[(5-phosphoribosylamino)methylideneamino] imidazole-4-carboxamide isomerase, found in Acidiphilium cryptum (strain JF-5).